The following is a 160-amino-acid chain: Sodium/proline symporter (160 aa).

2 consecutive transmembrane segments (helical) span residues 6 to 26 (PMLVTFIVYIFGMVLIGFIAW) and 68 to 88 (IFISGISESWIAIGLTLGAWI).

The protein belongs to the sodium:solute symporter (SSF) (TC 2.A.21) family.

Its subcellular location is the cell inner membrane. It carries out the reaction L-proline(in) + Na(+)(in) = L-proline(out) + Na(+)(out). In terms of biological role, catalyzes the sodium-dependent uptake of extracellular L-proline. In Klebsiella oxytoca, this protein is Sodium/proline symporter.